The primary structure comprises 465 residues: Serine hydroxymethyltransferase (465 aa).

K241 is modified (N6-(pyridoxal phosphate)lysine).

This sequence belongs to the SHMT family. As to quaternary structure, homotetramer. It depends on pyridoxal 5'-phosphate as a cofactor. As to expression, highest expression in the ovary and testis. 6- to 7-fold lower expression in hemocyte, silk gland, midgut and fat body.

The enzyme catalyses (6R)-5,10-methylene-5,6,7,8-tetrahydrofolate + glycine + H2O = (6S)-5,6,7,8-tetrahydrofolate + L-serine. Its pathway is one-carbon metabolism; tetrahydrofolate interconversion. In terms of biological role, interconversion of serine and glycine. This Bombyx mori (Silk moth) protein is Serine hydroxymethyltransferase (692975).